Here is an 85-residue protein sequence, read N- to C-terminus: UPF0386 protein RL2079 (85 aa).

This sequence belongs to the UPF0386 family.

The polypeptide is UPF0386 protein RL2079 (Rhizobium johnstonii (strain DSM 114642 / LMG 32736 / 3841) (Rhizobium leguminosarum bv. viciae)).